Here is a 479-residue protein sequence, read N- to C-terminus: Preferentially expressed antigen in melanoma-like protein 7 (479 aa).

The stretch at 96–124 (MGRLKKVDFRDAQHHASLDMQDEREGRDY) is one LRR 1; degenerate repeat. An LRR 2; degenerate repeat occupies 179 to 203 (HLCCEKLEIGAVEVSKVRNVLKFLQ). Residues 204–230 (PELIKELKLNTVGNLSKLAKFVPFIRK) form an LRR 3; degenerate repeat. Residues 231–265 (MRNLQKLMLVRTFGTRTFTQEEKQNISKIISLFCK) form an LRR 4; degenerate repeat. LRR repeat units lie at residues 266 to 291 (LSCL…LRCL), 292 to 323 (EAPL…SQLK), 324 to 347 (HLCL…LKRV), 348 to 375 (AANL…ALIK), and 376 to 400 (CTQL…FLHR).

It belongs to the PRAME family. In terms of assembly, interacts with UHRF1. In terms of tissue distribution, seems to be specific to pluripotent tissues in the early embryo. Not detected in somatic tissues.

Its function is as follows. Promotes maintenance and self-renewal of pluripotent embryonic stem cells (ESCs), downstream of LIF/STAT3. Maintains the pluripotency state of ESCs by repressing DNA methylation through the regulation of UHRF1 stability. Mediates the proteasomal degradation of UHRF1. Is required for the establishment of the blastocyst. The protein is Preferentially expressed antigen in melanoma-like protein 7 of Mus musculus (Mouse).